A 341-amino-acid chain; its full sequence is Glycerol-1-phosphate dehydrogenase [NAD(P)+] (341 aa).

NAD(+) contacts are provided by residues 81–85 and 103–106; these read GKAID and TTAS. Asp-108 contributes to the substrate binding site. Ser-112 is an NAD(+) binding site. Asp-151 is a substrate binding site. 2 residues coordinate Zn(2+): Asp-151 and His-232. Substrate is bound at residue His-236. His-253 is a binding site for Zn(2+).

This sequence belongs to the glycerol-1-phosphate dehydrogenase family. It depends on Zn(2+) as a cofactor.

Its subcellular location is the cytoplasm. It carries out the reaction sn-glycerol 1-phosphate + NAD(+) = dihydroxyacetone phosphate + NADH + H(+). The catalysed reaction is sn-glycerol 1-phosphate + NADP(+) = dihydroxyacetone phosphate + NADPH + H(+). Its pathway is membrane lipid metabolism; glycerophospholipid metabolism. Functionally, catalyzes the NAD(P)H-dependent reduction of dihydroxyacetonephosphate (DHAP or glycerone phosphate) to glycerol 1-phosphate (G1P). The G1P thus generated is used as the glycerophosphate backbone of phospholipids in the cellular membranes of Archaea. This is Glycerol-1-phosphate dehydrogenase [NAD(P)+] from Methanococcus aeolicus (strain ATCC BAA-1280 / DSM 17508 / OCM 812 / Nankai-3).